Here is a 111-residue protein sequence, read N- to C-terminus: Irditoxin subunit B (111 aa).

Residues 1-19 (MKTLLLAVAVVAFVCLGSA) form the signal peptide. Positions 20-34 (DQLGLGRQQIDWGKG) are excised as a propeptide. Pyrrolidone carboxylic acid is present on Q35. 5 cysteine pairs are disulfide-bonded: C44/C68, C47/C55, C61/C87, C91/C102, and C103/C108.

This sequence belongs to the three-finger toxin family. Ancestral subfamily. Boigatoxin sub-subfamily. Heterodimer of A and B chains; disulfide-linked. As to expression, expressed by the venom gland.

The protein resides in the secreted. Its function is as follows. This bird and reptile-specific postsynaptic neurotoxin inhibits the chick muscle alpha-1-beta-1-gamma-delta (CHRNA1-CHRNB1-CHRNG-CHRND) nicotinic acetylcholine receptor (nAChR) 100-fold more compared with the mouse receptor. In vivo, produces rapid flaccid paralysis, dyspnea and increased respiratory rate in geckos. At sublethal doses geckos were immobilized for up to three days and then recovered. Chicks injected with lethal doses showed rapid onset of inactivity, dyspnea and neck droop, and no extended paralysis with survival was seen. The protein is Irditoxin subunit B of Boiga irregularis (Brown tree snake).